The chain runs to 256 residues: Catechol O-methyltransferase A (256 aa).

The first 27 residues, 1–27 (MLWVVLAVVVVLASVLVLLRQSSGLLA), serve as a signal peptide directing secretion. An N-linked (GlcNAc...) asparagine glycan is attached at Asn58. 4 residues coordinate S-adenosyl-L-methionine: Val84, Ser114, Glu132, and Asp183. Residue Asp183 coordinates Mg(2+). Lys186 is a substrate binding site. Mg(2+) is bound by residues Asp211 and Asn212. Residues Asn212 and Glu241 each contribute to the substrate site.

This sequence belongs to the class I-like SAM-binding methyltransferase superfamily. Cation-dependent O-methyltransferase family. Mg(2+) is required as a cofactor. Widely expressed. Has higher expression in females compared to males. Strongly expressed in liver and diencephalon. Expressed at lower levels in hindbrain, spinal cord, eye, telencephalon, spleen, gut, gill and muscle. Detected in ovary and testis. In eye, detected in all layers of the retina with highest expression in the inner nuclear layer. In gut, expressed in the lamina propria but has little or no expression in gut epithelium. In brain, has strongest expression near the midline of the telencephalon, in the periventricular gray zone of the optic tectum, in the preglomerular nucleus, and near the walls of the diencephalic ventricle.

It localises to the secreted. The catalysed reaction is a catechol + S-adenosyl-L-methionine = a guaiacol + S-adenosyl-L-homocysteine + H(+). In terms of biological role, catalyzes the O-methylation, and thereby the inactivation, of catecholamine neurotransmitters and catechol hormones. Shows highest activity towards catecholestrogens and dobutamine. Also has lower activity towards L-DOPA, dopamine and epinephrine. Active towards the xenobiotic compounds methyl-DOPA, carbidopa, isoproterenol, and apomorphine. The sequence is that of Catechol O-methyltransferase A from Danio rerio (Zebrafish).